The sequence spans 1704 residues: Villidin (1704 aa).

WD repeat units lie at residues 82–122, 133–173, 180–221, and 225–271; these read GHTD…LIKD, KQQK…EQSS, GHED…TPIQ, and THEG…SSQP. Disordered stretches follow at residues 439 to 460 and 606 to 721; these read IGNS…DSPF and SVPS…NSST. Over residues 442-456 the composition is skewed to gly residues; it reads SGSGGGGGDGDGNGG. A PH 1 domain is found at 459–563; sequence PFITEGIVKQ…WCQSINAYRE (105 aa). Composition is skewed to low complexity over residues 613-636, 651-701, and 709-721; these read QQQQ…TPTQ, SLKS…SSSS, and NNST…NSST. 2 consecutive PH domains span residues 727-828 and 871-969; these read DIVI…QNLK and EQPL…AARK. A disordered region spans residues 848–877; sequence LISSPMSDDESNTNEGGVEEEEEEQPLEGQ. A compositionally biased stretch (acidic residues) spans 854 to 873; that stretch reads SDDESNTNEGGVEEEEEEQP. Gelsolin-like repeat units follow at residues 1025–1119, 1138–1241, 1293–1390, 1404–1494, and 1520–1615; these read KQKI…LGGN, IKTT…FANY, GRVK…FKTK, KKPS…FEST, and RFFV…FRAW. The HP domain occupies 1641–1704; the sequence is DYLKEIYTYE…EGIKKELFLF (64 aa).

Its subcellular location is the membrane. The protein localises to the cytoplasm. The protein resides in the cytoskeleton. May function as a linker between membranes and the actin cytoskeleton. The chain is Villidin (vilA) from Dictyostelium discoideum (Social amoeba).